Consider the following 558-residue polypeptide: uncharacterized protein (558 aa).

A run of 6 helical transmembrane segments spans residues 63–83, 90–110, 143–163, 168–188, 226–246, and 258–278; these read LTGI…PSIY, VTFG…TYWI, VAAV…TLYG, VFVT…ATNC, SLGS…VLLV, and VLIL…ILAW. The HAMP domain occupies 279–330; that stretch reads LTAAPVRVVRAALKRVEQGDLRGDLVVFDGTELGELQRGFNAMVNGLRERER. The Guanylate cyclase domain occupies 362–486; that stretch reads AVVFVDIVGS…KPVNQAARLC (125 aa). Positions 529-558 are disordered; that stretch reads TQLASPHRRPPGSIHLTAEHAEEIRTDRLG. Residues 545–558 show a composition bias toward basic and acidic residues; it reads TAEHAEEIRTDRLG.

The protein belongs to the adenylyl cyclase class-3 family.

It localises to the cell membrane. This is an uncharacterized protein from Mycobacterium tuberculosis (strain CDC 1551 / Oshkosh).